The following is a 377-amino-acid chain: Probable protein phosphatase 2C 61 (377 aa).

Residues 30 to 338 (AAGEFSMAAA…DDITAVVVFL (309 aa)) form the PPM-type phosphatase domain. 4 residues coordinate Mn(2+): Asp-64, Gly-65, Asp-269, and Asp-329.

It belongs to the PP2C family. Mg(2+) serves as cofactor. It depends on Mn(2+) as a cofactor.

The enzyme catalyses O-phospho-L-seryl-[protein] + H2O = L-seryl-[protein] + phosphate. It carries out the reaction O-phospho-L-threonyl-[protein] + H2O = L-threonyl-[protein] + phosphate. This is Probable protein phosphatase 2C 61 from Oryza sativa subsp. japonica (Rice).